A 270-amino-acid polypeptide reads, in one-letter code: Surfeit locus protein 4 homolog (270 aa).

6 helical membrane passes run phenylalanine 65 to valine 85, isoleucine 93 to tryptophan 113, phenylalanine 115 to alanine 135, leucine 178 to leucine 198, alanine 206 to isoleucine 226, and threonine 243 to methionine 263. Residues lysine 267–tryptophan 270 carry the Di-lysine motif motif.

It belongs to the SURF4 family.

Its subcellular location is the endoplasmic reticulum membrane. Its function is as follows. Endoplasmic reticulum cargo receptor that mediates the export of lipoproteins by recruiting cargos into COPII vesicles to facilitate their secretion. The protein is Surfeit locus protein 4 homolog of Drosophila melanogaster (Fruit fly).